Here is a 120-residue protein sequence, read N- to C-terminus: Large ribosomal subunit protein uL18 (120 aa).

It belongs to the universal ribosomal protein uL18 family. As to quaternary structure, part of the 50S ribosomal subunit. Part of the 5S rRNA/L5/L18/L25 subcomplex. Contacts the 23S rRNA and 5S rRNA. Required for catalysis of RNase M5.

Its function is as follows. This is one of the proteins that bind and probably mediate the attachment of the 5S RNA into the large ribosomal subunit, where it forms part of the central protuberance. Required for correct processing of both the 5' and 3' ends of 5S rRNA precursor, which is does in conjunction with ribonuclease M5 (RNase M5, rnmV). Possibly folds the 5S rRNA precursor into the correct conformation, thus acting as a chaperone. This chain is Large ribosomal subunit protein uL18, found in Bacillus subtilis (strain 168).